Reading from the N-terminus, the 240-residue chain is Phosphoribosylaminoimidazole-succinocarboxamide synthase (240 aa).

It belongs to the SAICAR synthetase family.

It catalyses the reaction 5-amino-1-(5-phospho-D-ribosyl)imidazole-4-carboxylate + L-aspartate + ATP = (2S)-2-[5-amino-1-(5-phospho-beta-D-ribosyl)imidazole-4-carboxamido]succinate + ADP + phosphate + 2 H(+). It participates in purine metabolism; IMP biosynthesis via de novo pathway; 5-amino-1-(5-phospho-D-ribosyl)imidazole-4-carboxamide from 5-amino-1-(5-phospho-D-ribosyl)imidazole-4-carboxylate: step 1/2. The sequence is that of Phosphoribosylaminoimidazole-succinocarboxamide synthase from Acidithiobacillus ferrooxidans (strain ATCC 23270 / DSM 14882 / CIP 104768 / NCIMB 8455) (Ferrobacillus ferrooxidans (strain ATCC 23270)).